The following is a 614-amino-acid chain: WD repeat-containing protein 26 (614 aa).

2 stretches are compositionally biased toward low complexity: residues 1–19 (MQAN…AGSG) and 34–44 (SNGVLSSNNGL). Positions 1–65 (MQANGAAAAA…PGGRKKKRLS (65 aa)) are disordered. Residues 67 to 99 (ADEDVIRLIGQHLHGLGLNQTVDLLMQESGCRL) form the LisH domain. A CTLH domain is found at 100–184 (EHPSATKFRN…EYLEDGKVLE (85 aa)). 6 WD repeats span residues 306 to 345 (EHCN…HQLK), 352 to 391 (GHAY…GELR), 397 to 437 (SHED…DSWE), 477 to 516 (QEDH…LVRK), 519 to 561 (GVTQ…PIAE), and 564 to 604 (GHTR…DNQE).

Forms homooligomers. Identified in the CTLH complex that contains at least MAEA, RMND5A (or alternatively its paralog RMND5B), GID8, WDR26, and RANBP9 and/or RANBP10. Interacts with DDB1-CUL4A/B E3 ligase complexes.

Its subcellular location is the cytoplasm. The protein resides in the nucleus. The protein localises to the mitochondrion. G-beta-like protein involved in cell signal transduction. Acts as a negative regulator in MAPK signaling pathway. Functions as a scaffolding protein to promote G beta:gamma-mediated PLCB2 plasma membrane translocation and subsequent activation in leukocytes. Core component of the CTLH E3 ubiquitin-protein ligase complex that mediates ubiquitination and subsequent proteasomal degradation of target proteins. Acts as a negative regulator of the canonical Wnt signaling pathway through preventing ubiquitination of beta-catenin CTNNB1 by the beta-catenin destruction complex, thus negatively regulating CTNNB1 degradation. Serves as a scaffold to coordinate PI3K/AKT pathway-driven cell growth and migration. Protects cells from oxidative stress-induced apoptosis via the down-regulation of AP-1 transcriptional activity as well as by inhibiting cytochrome c release from mitochondria. Also protects cells by promoting hypoxia-mediated autophagy and mitophagy. In Xenopus tropicalis (Western clawed frog), this protein is WD repeat-containing protein 26 (wdr26).